The primary structure comprises 285 residues: ADNRRPIWNLGHMVNAVKQIPTFLNDGANAIEADITFKGAVPTYSYHGTPCDFGRDCIRWEYFDVFLRTLREYTTPGNSKYREKFILFVLDLKTGSLNNHEVRKAGENVAKGLLENYWNNGNNGGRAYVVLSLPDIAHYEFIRTFKEVLKTAGHENLLDKVGYDLSGPYWPSLPSLDSVHEAFKKAGVDGHVWLSDGLTNWAKLGDMARLKEIIKSRDSENGFISKVYYWSVDKYSTTRTALDVGVDGIMTNYPYVIIDVLNENGYKDKYRLATYDDNPWETFKN.

Residue H12 is part of the active site. Mg(2+)-binding residues include E32 and D34. H47 serves as the catalytic Nucleophile. The cysteines at positions 51 and 57 are disulfide-linked. D91 contacts Mg(2+).

It belongs to the arthropod phospholipase D family. Class I subfamily. Mg(2+) is required as a cofactor. In terms of tissue distribution, expressed by the venom gland.

Its subcellular location is the secreted. The catalysed reaction is an N-(acyl)-sphingosylphosphocholine = an N-(acyl)-sphingosyl-1,3-cyclic phosphate + choline. It catalyses the reaction an N-(acyl)-sphingosylphosphoethanolamine = an N-(acyl)-sphingosyl-1,3-cyclic phosphate + ethanolamine. The enzyme catalyses a 1-acyl-sn-glycero-3-phosphocholine = a 1-acyl-sn-glycero-2,3-cyclic phosphate + choline. It carries out the reaction a 1-acyl-sn-glycero-3-phosphoethanolamine = a 1-acyl-sn-glycero-2,3-cyclic phosphate + ethanolamine. Its function is as follows. Dermonecrotic toxins cleave the phosphodiester linkage between the phosphate and headgroup of certain phospholipids (sphingolipid and lysolipid substrates), forming an alcohol (often choline) and a cyclic phosphate. This toxin acts on sphingomyelin (SM) (228.2 U/mg). It may also act on ceramide phosphoethanolamine (CPE), lysophosphatidylcholine (LPC) and lysophosphatidylethanolamine (LPE), but not on lysophosphatidylserine (LPS), and lysophosphatidylglycerol (LPG). It acts by transphosphatidylation, releasing exclusively cyclic phosphate products as second products. Induces dermonecrosis, hemolysis, increased vascular permeability, edema, inflammatory response, and platelet aggregation. Is lethal to mice. The protein is Dermonecrotic toxin LlSicTox-alphaIII2 of Loxosceles laeta (South American recluse spider).